We begin with the raw amino-acid sequence, 772 residues long: Delta-like protein A (772 aa).

The first 20 residues, 1 to 20 (MGRHLLLLLFSILYMLLCQA), serve as a signal peptide directing secretion. Residues 21-536 (SSSGVFELKL…SQIASDVPWT (516 aa)) are Extracellular-facing. Positions 179–223 (FVCDEHYYGEGCSVFCRPRDDAFGHFTCGERGEIICDAGWKGQYC) constitute a DSL domain. 26 disulfides stabilise this stretch: C181–C190, C194–C206, C214–C223, C228–C239, C232–C245, C259–C270, C265–C276, C278–C287, C294–C306, C300–C316, C318–C327, C334–C345, C339–C354, C356–C365, C372–C383, C377–C393, C395–C404, C411–C422, C416–C431, C433–C442, C449–C460, C454–C469, C471–C480, C487–C498, C492–C507, and C509–C518. 3 consecutive EGF-like domains span residues 225–257 (EPIC…RYCD), 257–288 (DECI…LFCN), and 290–328 (DLNY…ASCE). One can recognise an EGF-like 4; calcium-binding domain in the interval 330–366 (EVNECTGNPCRNGGSCTDMENTYSCTCPPGFYGKNCE). EGF-like domains follow at residues 368–405 (SAMT…FNCE), 407–443 (KIDH…MNCD), 445–481 (AGDE…RNCS), and 483–519 (PVSR…RNCQ). N479 carries N-linked (GlcNAc...) asparagine glycosylation. The chain crosses the membrane as a helical span at residues 537 to 557 (AVGSGVLLVLLLVVACAVVVV). At 558–772 (CVRSKVQQRR…KDECVIATEV (215 aa)) the chain is on the cytoplasmic side. The segment at 688-722 (EEKRRKRLKSDASEKSKYSESRYSESKYSESKYSE) is disordered. Positions 696–722 (KSDASEKSKYSESRYSESKYSESKYSE) are enriched in basic and acidic residues.

In terms of assembly, interacts with mib. In terms of processing, ubiquitinated by mib, leading to its endocytosis and subsequent degradation. Ubiquitinated by the ECS(ASB11) complex, leading to its degradation by the proteasome. In terms of tissue distribution, expressed in nervous system. In the developing nervous system, it is expressed in overlapping regions with deltaB (dlb) and deltaD (dld); in the neural plate, dla is expressed in patches of contiguous cells with dld, while dlb is confined to scattered cells within those patches that will differentiate as neurons. In 24 hours embryos, expressed in the hindbrain in stripes adjacent to rhombomere boundaries, but not in the actual boundary cells. During gastrulation and tail formation, expressed in embryonic midline cells. Expressed in hair cells of inner ear.

It localises to the membrane. Its function is as follows. Acts as a ligand for Notch receptors and is involved in primary neurogenesis. Can activate Notch receptors, thereby playing a key role in lateral inhibition, a process that prevents the immediate neighbors of each nascent neural cell from simultaneously embarking on neural differentiation. Required for boundary formation during segmentation of the hindbrain. Required for midline cell fate specification prior to germ layer formation; regulates specification of floorplate, notochord and hypochord. In inner ear, it prevents adjacent cells from adopting the same cell fate. Plays a role in angiogenesis. In Danio rerio (Zebrafish), this protein is Delta-like protein A (dla).